Consider the following 209-residue polypeptide: Pyroglutamyl-peptidase 1 (209 aa).

Catalysis depends on residues E85, C149, and H168.

Belongs to the peptidase C15 family. In terms of assembly, monomer.

Its subcellular location is the cytoplasm. The catalysed reaction is Release of an N-terminal pyroglutamyl group from a polypeptide, the second amino acid generally not being Pro.. Its activity is regulated as follows. Inhibited by transition metal ions including Ni(2+), Zn(2+), and Cu(2+) and by sulfhydryl-blocking agents. Functionally, removes 5-oxoproline from various penultimate amino acid residues except L-proline. This chain is Pyroglutamyl-peptidase 1 (PGPEP1), found in Homo sapiens (Human).